The primary structure comprises 2113 residues: Unconventional myosin-VIIb (2113 aa).

The 696-residue stretch at 65–760 (QGVDDMIRLG…QDTVLEIRRS (696 aa)) folds into the Myosin motor domain. 158–165 (GESGAGKT) lines the ATP pocket. The segment at 637–659 (LDQLMRILTNCQPYFVRCIKPNE) is actin-binding. IQ domains lie at 745-765 (IFLKDHQDTVLEIRRSQALDG), 763-792 (LDGAAIRIQRVLRGHKYRKEFLRQRRAAVT), 786-815 (QRRAAVTLQAGWRGYSQRKNFKLILVGFER), 809-838 (ILVGFERLQAIARSHLLMRQFQAMRQRIVQ), 832-861 (MRQRIVQLQARCRGYLVRQQVQAKRRAVVI), and 855-884 (KRRAVVIIQAHARGMVVRKSYWQQKSTGPQ). Ser-904 is modified (phosphoserine). The segment at 962 to 1578 (EEEVDSLAEY…STQLLSLLAM (617 aa)) is mediates interaction with ANKS4B. The 201-residue stretch at 989 to 1189 (HIQKPLRYPL…PTWLELQAVK (201 aa)) folds into the MyTH4 1 domain. In terms of domain architecture, FERM 1 spans 1194–1503 (IPIQVILATG…GGLKERSVFA (310 aa)). The residue at position 1339 (Thr-1339) is a Phosphothreonine. Ser-1368 bears the Phosphoserine mark. Positions 1497 to 2113 (KERSVFAMAL…GFRAPAPANP (617 aa)) are mediates interaction with CDHR2, CDHR5 and USH1C. The 67-residue stretch at 1498–1564 (ERSVFAMALQ…PTACLYTIPS (67 aa)) folds into the SH3 domain. MyTH4 domains follow at residues 1641 to 1790 (YSPE…KAAE) and 1790 to 1896 (EQNV…LNVT). Ser-1642 is modified (phosphoserine). One can recognise an FERM 2 domain in the interval 1796–2099 (LHHEVYLPND…SYVQQLLNTV (304 aa)).

Belongs to the TRAFAC class myosin-kinesin ATPase superfamily. Myosin family. Part of the IMAC/intermicrovillar adhesion complex/intermicrovillar tip-link complex composed of ANKS4B, MYO7B, USH1C, CDHR2 and CDHR5. Interacts with CDHR2. Interacts with CDHR5. Interacts with USH1C. Interacts with ANKS4B; requires initial interaction with USH1C. Interacts with CALML4; the interaction mediates the association of CALML4 with the IMAC/intermicrovillar adhesion complex. In terms of tissue distribution, expressed primarily in kidney and intestine. Detected in proximal tubule cells of the kidney and enterocytes of the intestine, specifically the distal tips of apical microvilli on these transporting epithelial cells (at protein level).

The protein resides in the cytoplasm. It is found in the cytoskeleton. It localises to the cell projection. The protein localises to the microvillus. Myosins are actin-based motor molecules with ATPase activity. Their highly divergent tails are presumed to bind to membranous compartments, which would be moved relative to actin filaments. As part of the intermicrovillar adhesion complex/IMAC plays a role in epithelial brush border differentiation, controlling microvilli organization and length. May link the complex to the actin core bundle of microvilli. This chain is Unconventional myosin-VIIb (Myo7b), found in Mus musculus (Mouse).